The following is a 248-amino-acid chain: Clathrin light chain A (248 aa).

The interval 1-92 (MAELDPFGAP…YYQESNGPTD (92 aa)) is disordered. Residues 13-25 (APGGPALGNGVAG) show a composition bias toward gly residues. Over residues 61-71 (GPQPHGEPPGG) the composition is skewed to pro residues. The segment at 100-162 (VDRLQSEPES…QLQKTKANNR (63 aa)) is involved in binding clathrin heavy chain. A phosphoserine mark is found at Ser105 and Ser206. N6-acetyllysine is present on Lys223. Ser236 carries the post-translational modification Phosphoserine. Residue Lys242 is modified to N6-acetyllysine.

Belongs to the clathrin light chain family. In terms of assembly, clathrin coats are formed from molecules containing 3 heavy chains and 3 light chains. Interacts with CALY; the interaction stimulates clathrin self-assembly and clathrin-mediated endocytosis. Interacts with CKAP5 and TACC3 forming the TACC3/ch-TOG/clathrin complex located at spindle inter-microtubules bridges; the complex implicates clathrin triskelions.

It is found in the cytoplasmic vesicle membrane. It localises to the membrane. Its subcellular location is the coated pit. The protein localises to the cytoplasm. The protein resides in the cytoskeleton. It is found in the spindle. Clathrin is the major protein of the polyhedral coat of coated pits and vesicles. Acts as a component of the TACC3/ch-TOG/clathrin complex proposed to contribute to stabilization of kinetochore fibers of the mitotic spindle by acting as inter-microtubule bridge. The polypeptide is Clathrin light chain A (CLTA) (Homo sapiens (Human)).